A 690-amino-acid polypeptide reads, in one-letter code: Eukaryotic translation initiation factor 3 subunit B (690 aa).

Over residues 1 to 11 the composition is skewed to basic and acidic residues; it reads MAKKKSEEHSG. Residues 1-36 form a disordered region; the sequence is MAKKKSEEHSGADANDSDYQEEPNFEDPPGFVDNIS. The segment covering 15-25 has biased composition (acidic residues); sequence NDSDYQEEPNF. The RRM domain occupies 57-141; that stretch reads SVVVVDNIPK…HTFAVNLFTD (85 aa). WD repeat units follow at residues 207-246, 293-331, 334-369, 442-484, and 530-575; these read TRER…KIQK, DGMS…LLDL, IKIP…TLME, EIRE…KPSL, and PDHF…IKRT. Residues 595–645 are a coiled coil; the sequence is EEKQKEIKKNLKKYYAAFEQKDRLRLTRASKELLEKRSQLRETFMEYRNKR.

The protein belongs to the eIF-3 subunit B family. Component of the eukaryotic translation initiation factor 3 (eIF-3) complex. The eIF-3 complex interacts with pix. Interacts with mxt.

The protein resides in the cytoplasm. Its function is as follows. RNA-binding component of the eukaryotic translation initiation factor 3 (eIF-3) complex, which is involved in protein synthesis of a specialized repertoire of mRNAs and, together with other initiation factors, stimulates binding of mRNA and methionyl-tRNAi to the 40S ribosome. The eIF-3 complex specifically targets and initiates translation of a subset of mRNAs involved in cell proliferation. The polypeptide is Eukaryotic translation initiation factor 3 subunit B (Drosophila yakuba (Fruit fly)).